Here is a 1246-residue protein sequence, read N- to C-terminus: MSEHNQDLRFLISDDVLNEDPMSTGRFAEEDRGSSDTEQLTDNKNDGEEPKETAVQAAFDGSDDVNRLEEPHNPVSSTANIGNFALLESSSAEVSDASCPATMPILVRQSPKTCSQPRTRKVKLSTLSLSSDPDPDINDPEFKARLEDSNQDDQDEELDLEMEEADSAGRESGEGNRDSEDEGLLADADLPIEVLLRRYGYPVPEGEGAVNGEPEQSESKGREQAAPTSTVSETLPSTKLSLAQPANQTDQSLTDTALPEPRVPEQLIISGKRQRRKKEIWTPDDSEPQHLVGKKRIKKVEIVEKVEADVHQNGDGLVIVEEETMGDEDNDDSKVGQEEEDGHEYDSEEEYDEDEDEEEEGAKEDNVDWDDRQDKEGDIGPRVRQPFLLRGTLRPYQQAGLEWLASLWSNNMNGILADEMGLGKTIQTIALLGHLACDKGVWGQHLIIVPTSVILNWEMEFKKFLPGMKVLTYYGNQKERKEKRVGWHTENTWQVCITSYQIVLADQHIFRRKNWCYMILDEAHNIKNFRSQRWQTLLGFKAQRRLLLTGTPLQNNLMELWSLLYFLMPGGIGADATAVVGFANHKEFMEWFSNPMDKAIETGDAMDEETLETVAKLHTLLRPFILRRLKSEVETQLPGKFEHVVYCRLSKRQRFLYDEFMSRASTHEALTTGGYLGVMNTLMQLRKVCNHPDLFEMRPVKTSFAMDNVARDFEPSDILIRKRLLAEEDERRIDALAIGFGVAHNEAMSGWVARARQTYDASDKLPYAASPLRRGKLSAPPPKDTRSVELWLKYRVWAEEEFSKRRWESIRATNRQRCGISPIYGSTFLSLLGNLPNFLLPQDVQSRREETFADFTPPAAKFITSLPERAKSLEDVIDRFAVIPPNAVARNLATYALPGLEPISHPALTDPAFDTLHRSSVKLQIAFPDASLLQYDCGKLQKLFEMLRDLKSEGHRVLIFTQMTRVLDILEMFLSHNGHRYLRLDGSTKIEDRQVLTERFNSDSRIFVFIASSRSGGVGINLTGADTVFFYDSDWNPSMDRQCMDRAHRIGQTREVHIYRFVSSHTVEENMLRKAEQKRLLDKMVIQEGGFNNDWWGRVGWKDMFGDVPGITDVSGVVEKSGEGIIDIQVEGTPVAEDVEVTRPRAGEERELARALAEVEDEEDAQAARMAQGEGELDLQEFEEGPKAVAKRVRVFEPENSGTPVTTEAGETGDVVEEYDDEPGSVEEYMLKWVEEDWDYFSPYRA.

Disordered regions lie at residues 1–53 (MSEH…PKET), 60–79 (DGSD…SSTA), 109–188 (QSPK…LADA), 202–292 (PVPE…QHLV), and 314–381 (GDGL…DIGP). Residues 27–52 (FAEEDRGSSDTEQLTDNKNDGEEPKE) show a composition bias toward basic and acidic residues. Residues 149–166 (SNQDDQDEELDLEMEEAD) show a composition bias toward acidic residues. Basic and acidic residues predominate over residues 167–178 (SAGRESGEGNRD). Over residues 226-255 (APTSTVSETLPSTKLSLAQPANQTDQSLTD) the composition is skewed to polar residues. Acidic residues-rich tracts occupy residues 320–331 (VEEETMGDEDND) and 338–362 (EEED…EEGA). The segment covering 363–381 (KEDNVDWDDRQDKEGDIGP) has biased composition (basic and acidic residues). In terms of domain architecture, Helicase ATP-binding spans 405 to 570 (ASLWSNNMNG…WSLLYFLMPG (166 aa)). 418–425 (DEMGLGKT) contacts ATP. A DEAH box motif is present at residues 521–524 (DEAH). In terms of domain architecture, Helicase C-terminal spans 939–1092 (KLQKLFEMLR…KMVIQEGGFN (154 aa)).

The protein belongs to the SNF2/RAD54 helicase family. SWR1 subfamily. As to quaternary structure, component of the SWR1 chromatin-remodeling complex.

The protein localises to the nucleus. It catalyses the reaction ATP + H2O = ADP + phosphate + H(+). Catalytic component of the SWR1 complex which mediates the ATP-dependent exchange of histone H2A for the H2A variant HZT1 leading to transcriptional regulation of selected genes by chromatin remodeling. The chain is Helicase SWR1 (SWR1) from Cryptococcus neoformans var. neoformans serotype D (strain B-3501A) (Filobasidiella neoformans).